The sequence spans 151 residues: MIQELKADLNGKGQKHCVIVSRFNEFITESLLKGALESFRMHGVEDVTVVRVPGAYEMPMVVSKAAASKKYDSIVCLGAVIRGATAHFDLVAGESAKIGSIGVQHSIPVIFGVLTTDTIEQAIERAGTKAGNKGAEAAATAVEMVNLLSLL.

5-amino-6-(D-ribitylamino)uracil contacts are provided by residues Phe23, 55-57, and 79-81; these read AYE and AVI. 84 to 85 contacts (2S)-2-hydroxy-3-oxobutyl phosphate; sequence AT. His87 (proton donor) is an active-site residue. Phe111 serves as a coordination point for 5-amino-6-(D-ribitylamino)uracil. Arg125 contacts (2S)-2-hydroxy-3-oxobutyl phosphate.

The protein belongs to the DMRL synthase family.

It catalyses the reaction (2S)-2-hydroxy-3-oxobutyl phosphate + 5-amino-6-(D-ribitylamino)uracil = 6,7-dimethyl-8-(1-D-ribityl)lumazine + phosphate + 2 H2O + H(+). Its pathway is cofactor biosynthesis; riboflavin biosynthesis; riboflavin from 2-hydroxy-3-oxobutyl phosphate and 5-amino-6-(D-ribitylamino)uracil: step 1/2. Catalyzes the formation of 6,7-dimethyl-8-ribityllumazine by condensation of 5-amino-6-(D-ribitylamino)uracil with 3,4-dihydroxy-2-butanone 4-phosphate. This is the penultimate step in the biosynthesis of riboflavin. The sequence is that of 6,7-dimethyl-8-ribityllumazine synthase from Leptospira interrogans serogroup Icterohaemorrhagiae serovar Lai (strain 56601).